The primary structure comprises 229 residues: Cytidylate kinase (229 aa).

ATP is bound at residue 12–20; it reads GPSGAGKGT.

It belongs to the cytidylate kinase family. Type 1 subfamily.

The protein resides in the cytoplasm. The catalysed reaction is CMP + ATP = CDP + ADP. It catalyses the reaction dCMP + ATP = dCDP + ADP. The protein is Cytidylate kinase of Pseudomonas paraeruginosa (strain DSM 24068 / PA7) (Pseudomonas aeruginosa (strain PA7)).